A 316-amino-acid chain; its full sequence is MKVLLANPRGFCAGVDRAIEIVKRTIDMLGTPIYVRHEVVHNRFVVDDLKQRGAIFVEELHQVPDGATVIFSAHGVSQAVRRQAAQRGLKVFDATCPLVTKVHLDVARHCRTGRDMILIGHAGHPEVEGTMGQWDQERGTGRIYLVENIDDVATLHVAQPHHLAYTTQTTLSVDDTRNIIDALRQRFPTIQGPKNNDICYATQNRQDAVRELARECDLVLVVGSPNSSNSNRLSELAQREGVASYLIDSAAEIDPAWVIDKHHIGVTAGASAPQVLVDGVLARLYELGATSVSEHSGKPESMVFALPKALRLQLVD.

Cys12 lines the [4Fe-4S] cluster pocket. (2E)-4-hydroxy-3-methylbut-2-enyl diphosphate is bound by residues His41 and His74. Residues His41 and His74 each contribute to the dimethylallyl diphosphate site. His41 and His74 together coordinate isopentenyl diphosphate. A [4Fe-4S] cluster-binding site is contributed by Cys96. His124 lines the (2E)-4-hydroxy-3-methylbut-2-enyl diphosphate pocket. His124 lines the dimethylallyl diphosphate pocket. His124 lines the isopentenyl diphosphate pocket. Glu126 (proton donor) is an active-site residue. Residue Thr169 coordinates (2E)-4-hydroxy-3-methylbut-2-enyl diphosphate. Cys199 provides a ligand contact to [4Fe-4S] cluster. The (2E)-4-hydroxy-3-methylbut-2-enyl diphosphate site is built by Ser227, Ser228, Asn229, and Ser271. 4 residues coordinate dimethylallyl diphosphate: Ser227, Ser228, Asn229, and Ser271. Ser227, Ser228, Asn229, and Ser271 together coordinate isopentenyl diphosphate.

This sequence belongs to the IspH family. [4Fe-4S] cluster serves as cofactor.

The enzyme catalyses isopentenyl diphosphate + 2 oxidized [2Fe-2S]-[ferredoxin] + H2O = (2E)-4-hydroxy-3-methylbut-2-enyl diphosphate + 2 reduced [2Fe-2S]-[ferredoxin] + 2 H(+). The catalysed reaction is dimethylallyl diphosphate + 2 oxidized [2Fe-2S]-[ferredoxin] + H2O = (2E)-4-hydroxy-3-methylbut-2-enyl diphosphate + 2 reduced [2Fe-2S]-[ferredoxin] + 2 H(+). It functions in the pathway isoprenoid biosynthesis; dimethylallyl diphosphate biosynthesis; dimethylallyl diphosphate from (2E)-4-hydroxy-3-methylbutenyl diphosphate: step 1/1. The protein operates within isoprenoid biosynthesis; isopentenyl diphosphate biosynthesis via DXP pathway; isopentenyl diphosphate from 1-deoxy-D-xylulose 5-phosphate: step 6/6. Catalyzes the conversion of 1-hydroxy-2-methyl-2-(E)-butenyl 4-diphosphate (HMBPP) into a mixture of isopentenyl diphosphate (IPP) and dimethylallyl diphosphate (DMAPP). Acts in the terminal step of the DOXP/MEP pathway for isoprenoid precursor biosynthesis. This chain is 4-hydroxy-3-methylbut-2-enyl diphosphate reductase, found in Xylella fastidiosa (strain M23).